The chain runs to 160 residues: Cytochrome b6-f complex subunit 4 (160 aa).

Helical transmembrane passes span 36–56, 95–115, and 131–151; these read LLYIPPVVIPGTIACTVGLAV, LLGVLLMAAVPAGLLVVPFPE, and TVFSAGTAVAPWLGIGAALPI.

Belongs to the cytochrome b family. PetD subfamily. As to quaternary structure, the 4 large subunits of the cytochrome b6-f complex are cytochrome b6, subunit IV (17 kDa polypeptide, petD), cytochrome f and the Rieske protein, while the 4 small subunits are petG, petL, petM and petN. The complex functions as a dimer.

The protein localises to the plastid. The protein resides in the chloroplast thylakoid membrane. Component of the cytochrome b6-f complex, which mediates electron transfer between photosystem II (PSII) and photosystem I (PSI), cyclic electron flow around PSI, and state transitions. The sequence is that of Cytochrome b6-f complex subunit 4 from Huperzia lucidula (Shining clubmoss).